The following is a 63-amino-acid chain: Large ribosomal subunit protein bL28 (63 aa).

Belongs to the bacterial ribosomal protein bL28 family.

This chain is Large ribosomal subunit protein bL28, found in Acidobacterium capsulatum (strain ATCC 51196 / DSM 11244 / BCRC 80197 / JCM 7670 / NBRC 15755 / NCIMB 13165 / 161).